The sequence spans 104 residues: Pyrimidine/purine nucleoside phosphorylase (104 aa).

It belongs to the nucleoside phosphorylase PpnP family.

It catalyses the reaction a purine D-ribonucleoside + phosphate = a purine nucleobase + alpha-D-ribose 1-phosphate. It carries out the reaction adenosine + phosphate = alpha-D-ribose 1-phosphate + adenine. The enzyme catalyses cytidine + phosphate = cytosine + alpha-D-ribose 1-phosphate. The catalysed reaction is guanosine + phosphate = alpha-D-ribose 1-phosphate + guanine. It catalyses the reaction inosine + phosphate = alpha-D-ribose 1-phosphate + hypoxanthine. It carries out the reaction thymidine + phosphate = 2-deoxy-alpha-D-ribose 1-phosphate + thymine. The enzyme catalyses uridine + phosphate = alpha-D-ribose 1-phosphate + uracil. The catalysed reaction is xanthosine + phosphate = alpha-D-ribose 1-phosphate + xanthine. Its function is as follows. Catalyzes the phosphorolysis of diverse nucleosides, yielding D-ribose 1-phosphate and the respective free bases. Can use uridine, adenosine, guanosine, cytidine, thymidine, inosine and xanthosine as substrates. Also catalyzes the reverse reactions. The protein is Pyrimidine/purine nucleoside phosphorylase of Hydrogenovibrio crunogenus (strain DSM 25203 / XCL-2) (Thiomicrospira crunogena).